Here is a 37-residue protein sequence, read N- to C-terminus: Conotoxin Bt1.8 (37 aa).

The propeptide occupies 1 to 20; the sequence is PDGRNAAAKAFDLITPTVRK. Disulfide bonds link C22/C28 and C23/C36. A Cysteine amide modification is found at C36.

Belongs to the conotoxin A superfamily. As to expression, expressed by the venom duct.

The protein localises to the secreted. Alpha-conotoxins bind to the nicotinic acetylcholine receptors (nAChR) and inhibit them. This toxin inhibits mammalian alpha-3-beta-2/CHRNA3-CHRNB2 nAChR (IC(50)=9.4 nM (rat), IC(50)=8.8 nM (human)), as well as the subunit chimera alpha-6/alpha-3-beta-2-beta-3 nAChR (CHRNA6/CHRNA3-CHRNB2-CHRNB3)(IC(50)=2.1 nM (rat), IC(50)=1.7 nM (human)). Binds to rat alpha-6/alpha-3-beta-2-beta-3 more rapidly than to alpha-3-beta-2, and dissociates more rapidly from alpha-3-beta-2 than from alpha-6/alpha-3-beta-2-beta-3. The polypeptide is Conotoxin Bt1.8 (Conus betulinus (Beech cone)).